A 125-amino-acid chain; its full sequence is Holo-[acyl-carrier-protein] synthase (125 aa).

Mg(2+) contacts are provided by Asp8 and Glu57.

The protein belongs to the P-Pant transferase superfamily. AcpS family. Mg(2+) is required as a cofactor.

The protein localises to the cytoplasm. The enzyme catalyses apo-[ACP] + CoA = holo-[ACP] + adenosine 3',5'-bisphosphate + H(+). In terms of biological role, transfers the 4'-phosphopantetheine moiety from coenzyme A to a Ser of acyl-carrier-protein. The chain is Holo-[acyl-carrier-protein] synthase from Nitrosomonas europaea (strain ATCC 19718 / CIP 103999 / KCTC 2705 / NBRC 14298).